Here is a 435-residue protein sequence, read N- to C-terminus: Serine--tRNA ligase (435 aa).

242-244 (TAE) contributes to the L-serine binding site. 273 to 275 (RSE) lines the ATP pocket. Glutamate 296 provides a ligand contact to L-serine. 360 to 363 (EISS) is a binding site for ATP. Serine 396 contributes to the L-serine binding site.

The protein belongs to the class-II aminoacyl-tRNA synthetase family. Type-1 seryl-tRNA synthetase subfamily. As to quaternary structure, homodimer. The tRNA molecule binds across the dimer.

The protein resides in the cytoplasm. It catalyses the reaction tRNA(Ser) + L-serine + ATP = L-seryl-tRNA(Ser) + AMP + diphosphate + H(+). The enzyme catalyses tRNA(Sec) + L-serine + ATP = L-seryl-tRNA(Sec) + AMP + diphosphate + H(+). The protein operates within aminoacyl-tRNA biosynthesis; selenocysteinyl-tRNA(Sec) biosynthesis; L-seryl-tRNA(Sec) from L-serine and tRNA(Sec): step 1/1. Its function is as follows. Catalyzes the attachment of serine to tRNA(Ser). Is also able to aminoacylate tRNA(Sec) with serine, to form the misacylated tRNA L-seryl-tRNA(Sec), which will be further converted into selenocysteinyl-tRNA(Sec). In Vibrio vulnificus (strain CMCP6), this protein is Serine--tRNA ligase.